Here is an 838-residue protein sequence, read N- to C-terminus: MNMQMADVQTRPARTAPTYAPAIDTIKEAVRRAEQRIAPLWPLRYFVAVNPYLGLIDHSFESAAYILARRAGARMTAPRSFYAQAIRSGRITDADLEAALAGGSPFPGAPANVAALKAFALGDEPEPTFPILPTVADAARKVTGINWADVVTDLISTWAGAYFDLGQSYWRSPWKHLPPYAAWRAEAAHDRTPQTRGVHGFRQALREMPESAMETIVAAVEKLNIPINGLEAYLHRLLLSIHGWAAYARYLRWDAELYGGEDHTLTDLLAIRLVWEVALWHSFARKGVADVWRSMAGEYVNDRPDPALQRALAGDLLLQRAFEKAYQRQFFAQLGATTPARVAARKRVQAAFCIDVRSEIFRRALETVTDEIETIGFAGFFGFPIEYVPLAETRGGAQCPVLLTPQFVIAESVDGASERDVNAAIEKRAQNQRVAKAWRMFKFAPISCFGFVGPVGLAYVRKLALDTLGITRPVPHPATFGLDAHTRERVAPSLEPRTLGGRTTGMTLEQRVAAAEGALKAMSLTNNFARLVLLTGHGSTTVNNPHATGLDCGACGGHTGEANVRVAVRILNDPAVRAGLKERGLIIPDDTVFLAGLHDTTTDDVTIFDKAHIPASHTADLKRLEADLAAAGRLARAERSMLLKIGTKTDIDSAVRRRSKDWSQVRPEWGLAGCAAFIVAPRDRNAGVVMNGRSFLHSYEWRQDEGFGVLELIMTAPMIVASWINLQYYGSTVDNRVFGSGNKTLHNVVGTLGVLEGNAGDLRVGLPWQSVHDGEKYVHEPMRLHVMIEAPIDAMTAIIARHEQVRQLLDNGWLYLFALDASGKVTHRYIGGLQWEEC.

Cys353, Asp355, His537, and Cys552 together coordinate Zn(2+).

Belongs to the inorganic carbon transporter (TC 9.A.2) DabA family. As to quaternary structure, forms a complex with DabB. The cofactor is Zn(2+).

It is found in the cell membrane. In terms of biological role, part of an energy-coupled inorganic carbon pump. In Roseiflexus sp. (strain RS-1), this protein is Probable inorganic carbon transporter subunit DabA.